A 426-amino-acid chain; its full sequence is MADSFELIVTRKEPVLVSPASETPKGLHYLSNLDQNIAIIVKTFYYFKSNSRSNEESYEVIKKSLSEVLVHYYPAAGRLTISPEGKIAVDCTGEGVVVVEAEANCGIEKIKKAISEIDQPETLEKLVYDVPGARNILEIPPVVVQVTNFKCGGFVLGLGMNHNMFDGIAAMEFLNSWAETARGLPLSVPPFLDRTLLRPRTPPKIEFPHNEFEDLEDISGTGKLYSDEKLVYKSFLFGPEKLERLKIMAETRSTTFQTLTGFLWRARCQALGLKPDQRIKLLFAADGRSRFVPELPKGYSGNGIVFTYCVTTAGEVTLNPLSHSVCLVKRAVEMVNDGFMRSAIDYFEVTRARPSLTATLLITSWAKLSFHTKDFGWGEPVVSGPVGLPEKEVILFLPCGSDTKSINVLLGLPGSAMKVFQGIMDI.

Active-site proton acceptor residues include His-162 and Asp-374.

The protein belongs to the plant acyltransferase family. Expressed in the outermost circumference of mature roots, the endodermis of young roots and in the seed coat of developing seeds. Expressed in outer integument layer 1 of the seed coat.

Its function is as follows. Involved in the synthesis of alkyl hydroxycinnamates in root waxes. Functions as a fatty alcohol:hydroxy cinnamoyl-CoA acyltransferase with apparent preference for caffeoyl-CoA. This is Fatty alcohol:caffeoyl-CoA acyltransferase from Arabidopsis thaliana (Mouse-ear cress).